Consider the following 1405-residue polypeptide: MKDLLNLFNQQRQTLDFDAIKIALASPDLIRSWSYGEVKKPETINYRTFKPERDGLFCAAIFGPIKDYECLCGKYKRMKHRGVVCEKCGTEVTLAKVRRERMGHIDLASPVAHIWFLKSLPSRIGLMLDMTLRDIERVLYFEAYVVTEPGLTPLERRQLLTEEQYLTARQEYNDDFDAAMGAEAVYELLRTIDLQSEMTRLREEIASTGSETKLKRLTKRIKLIEAFLESGNRPEWMVMTVLPVLPPDLRPLVPLDGGRFATSDLNDLYRRVINRNNRLRRLLELNAPDIIVRNEKRMLQESVDALLDNGRRGRAITGTNKRPLKSLADMIKGKQGRFRQNLLGKRVDYSGRSVITVGPYLKLHQCGLPKKMALELFKPFVFAKLQRRGLATTIKAAKKLVEREEAEVWDILEEVIREHPVLLNRAPTLHRLGIQAFEPVLIEGKAIQLHPLVCTAFNADFDGDQMAVHVPLSLEAQLEARALMMSTNNILSPANGEPIIVPSQDVVLGLYYMSRALENKKGEGMVFANTSEVKRAYDNRVVELHAKVKVRITQVDVDAVDGKRTSGTSIVDTTVGRALLSEILPEGLPFQLANTEMTKKNISRLINSSYRLLGLKDTVVFADKLMYTGYAYATRAGVSIGIDDMLIPDEKKGILTEAEAEVLEIQEQYQSGLVTAGERYNKVVDIWSRTSERIAKAMMDTIGTEKVENAKGETIDQKSMNSLYIMADSGARGSQAQIRQLAGMRGLMARPDGSIIETPIKANFREGLNVQEYFNSTHGARKGLADTALKTANSGYLTRRLVDVAQDVVITEIDCGTTEGLIMTPIVEGGDVVEPLKERVLGRVVAEDVYLPGNDEEPIVTRNTLLDEAWVAKLEDASVQSVKVRSTISCESSFGVCARCYGRDLARGHQVNIGEAVGVIAAQSIGEPGTQLTMRTFHIGGAASRAAAVDNITVKTTGSVKFNNLKSVAHASGSLVAVSRSGELSVLDGHGRERERYKLPYGATITAKDGDAVKAGQSVANWDPHNHPIVSEVAGFIRFIDFVDGVTVIEKTDELTGLASREITDPKRRGAHAKELRPIVRIVDGKGNDLTIPNTDLPAQYLLPPRSIVNLQDGAAVGVGDVVAKIPQEASKTRDITGGLPRVADLFEARKPKDPAILAERSGIISFGKDTKGKQRLIIKDTDGSEHEELIPKYRQIIVFEGEHVTKGETVVDGEPSPQDILRLLGVEPLAAYLVKEIQDVYRLQGVKINDKHIEVITRQMLRKVEIVDQGNSKFLNGEQVERQRVIEENARLVKRNELPAKYDPVLLGITKASLATESFISAASFQETTRVLTEAAVRGTRDNLRGLKENVIVGRLIPAGTGLAYHAGRRKASGLTDSEMETLSGKPAGAEPVAALADAGADEE.

Cys-70, Cys-72, Cys-85, and Cys-88 together coordinate Zn(2+). Mg(2+) contacts are provided by Asp-460, Asp-462, and Asp-464. 4 residues coordinate Zn(2+): Cys-815, Cys-890, Cys-897, and Cys-900. A disordered region spans residues Gly-1375–Glu-1405.

It belongs to the RNA polymerase beta' chain family. As to quaternary structure, the RNAP catalytic core consists of 2 alpha, 1 beta, 1 beta' and 1 omega subunit. When a sigma factor is associated with the core the holoenzyme is formed, which can initiate transcription. Mg(2+) serves as cofactor. Zn(2+) is required as a cofactor.

It catalyses the reaction RNA(n) + a ribonucleoside 5'-triphosphate = RNA(n+1) + diphosphate. Its function is as follows. DNA-dependent RNA polymerase catalyzes the transcription of DNA into RNA using the four ribonucleoside triphosphates as substrates. The polypeptide is DNA-directed RNA polymerase subunit beta' (Xanthomonas oryzae pv. oryzae (strain MAFF 311018)).